We begin with the raw amino-acid sequence, 525 residues long: Peptide chain release factor 3 (525 aa).

Residues Ala9–Gln276 form the tr-type G domain. GTP-binding positions include Ser18–Thr25, Asp86–His90, and Asn140–Asp143.

Belongs to the TRAFAC class translation factor GTPase superfamily. Classic translation factor GTPase family. PrfC subfamily.

It is found in the cytoplasm. In terms of biological role, increases the formation of ribosomal termination complexes and stimulates activities of RF-1 and RF-2. It binds guanine nucleotides and has strong preference for UGA stop codons. It may interact directly with the ribosome. The stimulation of RF-1 and RF-2 is significantly reduced by GTP and GDP, but not by GMP. This chain is Peptide chain release factor 3, found in Francisella tularensis subsp. mediasiatica (strain FSC147).